We begin with the raw amino-acid sequence, 541 residues long: MEGTDQKKAAVGTREGLPCIAPLLTTVEETPQVVSAQVRGHFPKWLSGSLLRIGPGKFEFGKDKYNHWFDGMALLHQFKMEKGMVTYRSKFLQSDTYKTNSVHDRIVISEFGTLALPDPCKNVFERFMSKFELPAITDNTSVNYVRYKGDYYVSTETNFMNKVDIETLEKTEKVDWSKFIAVNGATAHPHYDPDGTAYNMGNSYGLHGSCYNVIRVPPEKVDLGETLHGAQVICSIASTERMKPSYYHSFGMTRNYIIFIEQPLKMNLWKMITSRIRGMAFSDGISWEPQYNTRFHVVDKNTGQLLPGMYYSKPFVTFHQINAFEDQGCVVLDLCCQDDGRSLEAYRLQNLRKAGAGLDQVYNSVGRSFPRRFVLPLHVSLNDPEGENLSPLSYSSASAVKQANGKIWCSYENLHPEDLEEEGGVEFPQINYGQFSGKKYRFFYGCGFRHLVGDSLIKLDVVNKTLMIWREDGFYPSEPVFVPAPGASEEDGGVILSVVITPDQNENNFLLVLDAKNFEELGRAEVPVRMPYGFHGTFVTV.

Fe cation is bound by residues His-188, His-248, His-319, and His-535.

The protein belongs to the carotenoid oxygenase family. It depends on Fe(2+) as a cofactor. As to expression, widely expressed. Detected in heart, spleen, lung, intestine, colon, stomach, kidney, bladder, and prostate. Highly expressed in liver and testis (at protein level).

It localises to the mitochondrion. It catalyses the reaction all-trans-beta-carotene + O2 = beta-ionone + all-trans-10'-apo-beta-carotenal. The enzyme catalyses 5-cis-lycopene + O2 = 5-cis-10'-apo-lycopenal + (3E,5E)-6,10-dimethylundeca-3,5,9-trien-2-one. It carries out the reaction 13-cis-lycopene + O2 = 13-cis-10'-apo-lycopenal + (3E,5E)-6,10-dimethylundeca-3,5,9-trien-2-one. The catalysed reaction is lutein + O2 = (3R,6R)-hydroxy-alpha-ionone + (3R)-3-hydroxy-10'-apo-beta-carotenal. It catalyses the reaction lutein + O2 = (3R,6R)-3-hydroxy-10'-apo-alpha-carotenal + (3R)-hydroxy-beta-ionone. The enzyme catalyses all-trans-zeaxanthin + 2 O2 = 4,9-dimethyldodeca-2,4,6,8,10-pentaenedial + 2 (3R)-hydroxy-beta-ionone. It carries out the reaction all-trans-zeaxanthin + O2 = (3R)-3-hydroxy-10'-apo-beta-carotenal + (3R)-hydroxy-beta-ionone. The catalysed reaction is beta-cryptoxanthin + O2 = all-trans-10'-apo-beta-carotenal + (3R)-hydroxy-beta-ionone. It catalyses the reaction all-trans-10'-apo-beta-carotenal + O2 = beta-ionone + 4,9-dimethyldodeca-2,4,6,8,10-pentaenedial. The enzyme catalyses (3R)-3-hydroxy-10'-apo-beta-carotenal + O2 = 4,9-dimethyldodeca-2,4,6,8,10-pentaenedial + (3R)-hydroxy-beta-ionone. It carries out the reaction (3R,6R)-3-hydroxy-10'-apo-alpha-carotenal + O2 = (3R,6R)-hydroxy-alpha-ionone + 4,9-dimethyldodeca-2,4,6,8,10-pentaenedial. Functionally, broad specificity mitochondrial dioxygenase that mediates the asymmetric oxidative cleavage of carotenoids. Cleaves carotenes (pure hydrocarbon carotenoids) such as all-trans-beta-carotene and lycopene as well as xanthophylls (oxygenated carotenoids) such as zeaxanthin, lutein and beta-cryptoxanthin at both the 9,10 and the 9',10' carbon-carbon double bond. Through its function in carotenoids metabolism regulates oxidative stress and the production of important signaling molecules. The protein is Carotenoid-cleaving dioxygenase, mitochondrial of Mustela putorius furo (European domestic ferret).